An 80-amino-acid polypeptide reads, in one-letter code: D-alanyl carrier protein 1 (80 aa).

Residues 1 to 80 (MTMDDTKATV…KIVAKVENLQ (80 aa)) form the Carrier domain. Residue Ser38 is modified to O-(pantetheine 4'-phosphoryl)serine.

This sequence belongs to the DltC family. 4'-phosphopantetheine is transferred from CoA to a specific serine of apo-DCP.

The protein localises to the cytoplasm. Its pathway is cell wall biogenesis; lipoteichoic acid biosynthesis. Carrier protein involved in the D-alanylation of lipoteichoic acid (LTA). The loading of thioester-linked D-alanine onto DltC is catalyzed by D-alanine--D-alanyl carrier protein ligase DltA. The DltC-carried D-alanyl group is further transferred to cell membrane phosphatidylglycerol (PG) by forming an ester bond, probably catalyzed by DltD. D-alanylation of LTA plays an important role in modulating the properties of the cell wall in Gram-positive bacteria, influencing the net charge of the cell wall. In Lactiplantibacillus plantarum (strain ATCC BAA-793 / NCIMB 8826 / WCFS1) (Lactobacillus plantarum), this protein is D-alanyl carrier protein 1.